The sequence spans 323 residues: tRNA-dihydrouridine(20/20a) synthase (323 aa).

Residues 14–16 and Gln66 each bind FMN; that span reads PML. The active-site Proton donor is Cys96. Residues Lys135, His166, 206–208, and 228–229 contribute to the FMN site; these read NGG and GR.

The protein belongs to the Dus family. DusA subfamily. Requires FMN as cofactor.

The enzyme catalyses 5,6-dihydrouridine(20) in tRNA + NADP(+) = uridine(20) in tRNA + NADPH + H(+). The catalysed reaction is 5,6-dihydrouridine(20) in tRNA + NAD(+) = uridine(20) in tRNA + NADH + H(+). It catalyses the reaction 5,6-dihydrouridine(20a) in tRNA + NADP(+) = uridine(20a) in tRNA + NADPH + H(+). It carries out the reaction 5,6-dihydrouridine(20a) in tRNA + NAD(+) = uridine(20a) in tRNA + NADH + H(+). In terms of biological role, catalyzes the synthesis of 5,6-dihydrouridine (D), a modified base found in the D-loop of most tRNAs, via the reduction of the C5-C6 double bond in target uridines. Specifically modifies U20 and U20a in tRNAs. The sequence is that of tRNA-dihydrouridine(20/20a) synthase from Haemophilus ducreyi (strain 35000HP / ATCC 700724).